Consider the following 259-residue polypeptide: uncharacterized protein (259 aa).

A divalent metal cation contacts are provided by histidine 9, histidine 11, glutamate 97, histidine 133, histidine 157, and aspartate 207.

This sequence belongs to the metallo-dependent hydrolases superfamily. TatD-type hydrolase family. Requires a divalent metal cation as cofactor.

This is an uncharacterized protein from Escherichia coli (strain K12).